We begin with the raw amino-acid sequence, 482 residues long: Glycogen synthase (482 aa).

Lys-15 is an ADP-alpha-D-glucose binding site.

Belongs to the glycosyltransferase 1 family. Bacterial/plant glycogen synthase subfamily.

It carries out the reaction [(1-&gt;4)-alpha-D-glucosyl](n) + ADP-alpha-D-glucose = [(1-&gt;4)-alpha-D-glucosyl](n+1) + ADP + H(+). Its pathway is glycan biosynthesis; glycogen biosynthesis. Its function is as follows. Synthesizes alpha-1,4-glucan chains using ADP-glucose. The protein is Glycogen synthase of Elusimicrobium minutum (strain Pei191).